A 335-amino-acid polypeptide reads, in one-letter code: Glyceraldehyde-3-phosphate dehydrogenase (335 aa).

NAD(+)-binding positions include 13 to 14 (TI) and G111. 140-142 (SCN) provides a ligand contact to D-glyceraldehyde 3-phosphate. The Nucleophile role is filled by C141. R169 contacts NAD(+). Residues T171 and 195–196 (HG) contribute to the D-glyceraldehyde 3-phosphate site. Q300 is an NAD(+) binding site.

Belongs to the glyceraldehyde-3-phosphate dehydrogenase family. In terms of assembly, homotetramer.

It is found in the cytoplasm. It carries out the reaction D-glyceraldehyde 3-phosphate + phosphate + NADP(+) = (2R)-3-phospho-glyceroyl phosphate + NADPH + H(+). It catalyses the reaction D-glyceraldehyde 3-phosphate + phosphate + NAD(+) = (2R)-3-phospho-glyceroyl phosphate + NADH + H(+). The protein operates within carbohydrate degradation; glycolysis; pyruvate from D-glyceraldehyde 3-phosphate: step 1/5. This chain is Glyceraldehyde-3-phosphate dehydrogenase, found in Methanosarcina mazei (strain ATCC BAA-159 / DSM 3647 / Goe1 / Go1 / JCM 11833 / OCM 88) (Methanosarcina frisia).